The following is a 204-amino-acid chain: MLRIAIAKGRLMDSLINYLDVIEYTTLSETLKNRERQLLLSVDNIECILVKGSDVPIYVEQGMADIGIVGSDILDERQYNVNNLLNMPFGACHFAVAAKPETTNYRKIATSYVHTAETYFKSKGIDVELIKLNGSVELACVVDMVDGIVDIVQTGTTLKANGLVEKQHISDINARLITNKAAYFKKSQLIEQFIRSLEVSIANA.

Belongs to the ATP phosphoribosyltransferase family. Short subfamily. As to quaternary structure, heteromultimer composed of HisG and HisZ subunits.

Its subcellular location is the cytoplasm. The catalysed reaction is 1-(5-phospho-beta-D-ribosyl)-ATP + diphosphate = 5-phospho-alpha-D-ribose 1-diphosphate + ATP. Its pathway is amino-acid biosynthesis; L-histidine biosynthesis; L-histidine from 5-phospho-alpha-D-ribose 1-diphosphate: step 1/9. Its function is as follows. Catalyzes the condensation of ATP and 5-phosphoribose 1-diphosphate to form N'-(5'-phosphoribosyl)-ATP (PR-ATP). Has a crucial role in the pathway because the rate of histidine biosynthesis seems to be controlled primarily by regulation of HisG enzymatic activity. The chain is ATP phosphoribosyltransferase from Staphylococcus aureus (strain Mu3 / ATCC 700698).